Consider the following 227-residue polypeptide: Cytochrome c oxidase subunit 2 (227 aa).

Over 1-14 the chain is Mitochondrial intermembrane; sequence MAYPFQLGFQDATS. A helical membrane pass occupies residues 15-45; the sequence is PIMEELLHFHDHTLMIVFLISSLVLYVISAM. At 46-59 the chain is on the mitochondrial matrix side; sequence LTTNLTHTSTMDAQ. Residues 60 to 87 traverse the membrane as a helical segment; sequence EVETIWTILPAIILITIALPSLRILYMM. The Mitochondrial intermembrane segment spans residues 88–227; it reads DEINNPAMTI…YFEKWSVSML (140 aa). Residues histidine 161, cysteine 196, glutamate 198, cysteine 200, histidine 204, and methionine 207 each coordinate Cu cation. Residue glutamate 198 participates in Mg(2+) binding. Position 218 is a phosphotyrosine (tyrosine 218).

This sequence belongs to the cytochrome c oxidase subunit 2 family. Component of the cytochrome c oxidase (complex IV, CIV), a multisubunit enzyme composed of 14 subunits. The complex is composed of a catalytic core of 3 subunits MT-CO1, MT-CO2 and MT-CO3, encoded in the mitochondrial DNA, and 11 supernumerary subunits COX4I, COX5A, COX5B, COX6A, COX6B, COX6C, COX7A, COX7B, COX7C, COX8 and NDUFA4, which are encoded in the nuclear genome. The complex exists as a monomer or a dimer and forms supercomplexes (SCs) in the inner mitochondrial membrane with NADH-ubiquinone oxidoreductase (complex I, CI) and ubiquinol-cytochrome c oxidoreductase (cytochrome b-c1 complex, complex III, CIII), resulting in different assemblies (supercomplex SCI(1)III(2)IV(1) and megacomplex MCI(2)III(2)IV(2)). Found in a complex with TMEM177, COA6, COX18, COX20, SCO1 and SCO2. Interacts with TMEM177 in a COX20-dependent manner. Interacts with COX20. Interacts with COX16. Cu cation serves as cofactor.

It is found in the mitochondrion inner membrane. It catalyses the reaction 4 Fe(II)-[cytochrome c] + O2 + 8 H(+)(in) = 4 Fe(III)-[cytochrome c] + 2 H2O + 4 H(+)(out). Functionally, component of the cytochrome c oxidase, the last enzyme in the mitochondrial electron transport chain which drives oxidative phosphorylation. The respiratory chain contains 3 multisubunit complexes succinate dehydrogenase (complex II, CII), ubiquinol-cytochrome c oxidoreductase (cytochrome b-c1 complex, complex III, CIII) and cytochrome c oxidase (complex IV, CIV), that cooperate to transfer electrons derived from NADH and succinate to molecular oxygen, creating an electrochemical gradient over the inner membrane that drives transmembrane transport and the ATP synthase. Cytochrome c oxidase is the component of the respiratory chain that catalyzes the reduction of oxygen to water. Electrons originating from reduced cytochrome c in the intermembrane space (IMS) are transferred via the dinuclear copper A center (CU(A)) of subunit 2 and heme A of subunit 1 to the active site in subunit 1, a binuclear center (BNC) formed by heme A3 and copper B (CU(B)). The BNC reduces molecular oxygen to 2 water molecules using 4 electrons from cytochrome c in the IMS and 4 protons from the mitochondrial matrix. In Macrotus californicus (Californian leaf-nosed bat), this protein is Cytochrome c oxidase subunit 2 (MT-CO2).